A 308-amino-acid chain; its full sequence is Follistatin-related protein 1 (308 aa).

A signal peptide spans Met-1–Ala-20. Positions Ile-30–Leu-53 constitute a Follistatin-like domain. 5 disulfide bridges follow: Cys-31/Cys-42, Cys-36/Cys-52, Cys-54/Cys-84, Cys-58/Cys-77, and Cys-66/Cys-98. Residues Gly-48 to Glu-100 enclose the Kazal-like domain. An N-linked (GlcNAc...) asparagine glycan is attached at Asn-144. An EF-hand 1 domain is found at Asn-144–Ala-178. Ser-165 is modified (phosphoserine). 2 N-linked (GlcNAc...) asparagine glycosylation sites follow: Asn-175 and Asn-180. The EF-hand 2 domain maps to Leu-193–Pro-228. One can recognise a VWFC domain in the interval Cys-233–Val-287.

Homodimer. Interacts with SCN10A. Interacts with DIP2A; DIP2A may act as a cell surface receptor for FSTL1. Interacts with BMP4. Interacts with CD14; this interaction promotes TL4-mediated signaling cascade.

It is found in the secreted. Secreted glycoprotein that is involved in various physiological processes, such as angiogenesis, regulation of the immune response, cell proliferation and differentiation. Plays a role in the development of the central nervous system, skeletal system, lungs, and ureter. Promotes endothelial cell survival, migration and differentiation into network structures in an AKT-dependent manner. Also promotes survival of cardiac myocytes. Initiates various signaling cascades by activating different receptors on the cell surface such as DIP2A, TLR4 or BMP receptors. The sequence is that of Follistatin-related protein 1 (FSTL1) from Macaca fascicularis (Crab-eating macaque).